The primary structure comprises 496 residues: Probable CtpA-like serine protease (496 aa).

Basic and acidic residues predominate over residues 1 to 16 (MDDKQHTSSSDDERAE). The disordered stretch occupies residues 1–27 (MDDKQHTSSSDDERAEIATSNQDQETN). The segment covering 18–27 (ATSNQDQETN) has biased composition (polar residues). The chain crosses the membrane as a helical span at residues 39-59 (FISILIGTTLITAVITVVAYI). Residues 124–206 (TKSFNEGVSG…TEVTLTVQRG (83 aa)) form the PDZ domain. Active-site charge relay system residues include serine 329, aspartate 340, and lysine 354.

This sequence belongs to the peptidase S41A family.

It is found in the cell membrane. The protein is Probable CtpA-like serine protease of Staphylococcus aureus (strain Mu50 / ATCC 700699).